We begin with the raw amino-acid sequence, 485 residues long: MKTPSQPRAIYYIVAIQIWEYFSFYGMRALLILYLTHQLGFDDNHAISLFSAYASLVYVTPILGGWLADRLLGNRTAVIAGALLMTLGHVVLGIDTNSTFSLYLALAIIICGYGLFKSNISCLLGELYDENDHRRDGGFSLLYAAGNIGSIAAPIACGLAAQWYGWHVGFALAGGGMFIGLLIFLSGHRHFQSTRSMDKKALTSVKFALPVWSWLVVMLCLAPVFFTLLLENDWSGYLLAIVCLIAAQIIARMMIKFPEHRRALWQIVLLMFVGTLFWVLAQQGGSTISLFIDRFVNRQAFNIEVPTALFQSVNAIAVMLAGVVLAWLASPESRGNSTLRVWLKFAFGLLLMACGFMLLAFDARHAAADGQASMGVMISGLALMGFAELFIDPVAIAQITRLKMSGVLTGIYMLATGAVANWLAGVVAQQTTESQISGMAIAAYQRFFSQMGEWTLACVAIIVVLAFATRFLFSTPTNMIQESND.

Over 1–12 (MKTPSQPRAIYY) the chain is Cytoplasmic. The helical transmembrane segment at 13–33 (IVAIQIWEYFSFYGMRALLIL) threads the bilayer. Over 34-46 (YLTHQLGFDDNHA) the chain is Periplasmic. Residues 47–67 (ISLFSAYASLVYVTPILGGWL) form a helical membrane-spanning segment. Over 68-70 (ADR) the chain is Cytoplasmic. The chain crosses the membrane as a helical span at residues 71 to 93 (LLGNRTAVIAGALLMTLGHVVLG). Residues 94–102 (IDTNSTFSL) are Periplasmic-facing. The chain crosses the membrane as a helical span at residues 103–125 (YLALAIIICGYGLFKSNISCLLG). The Cytoplasmic portion of the chain corresponds to 126 to 140 (ELYDENDHRRDGGFS). The chain crosses the membrane as a helical span at residues 141–161 (LLYAAGNIGSIAAPIACGLAA). The Periplasmic portion of the chain corresponds to 162-164 (QWY). The helical transmembrane segment at 165–185 (GWHVGFALAGGGMFIGLLIFL) threads the bilayer. Residues 186–208 (SGHRHFQSTRSMDKKALTSVKFA) are Cytoplasmic-facing. A helical membrane pass occupies residues 209 to 229 (LPVWSWLVVMLCLAPVFFTLL). At 230–234 (LENDW) the chain is on the periplasmic side. Residues 235-255 (SGYLLAIVCLIAAQIIARMMI) traverse the membrane as a helical segment. At 256–262 (KFPEHRR) the chain is on the cytoplasmic side. The chain crosses the membrane as a helical span at residues 263–283 (ALWQIVLLMFVGTLFWVLAQQ). The Periplasmic segment spans residues 284–307 (GGSTISLFIDRFVNRQAFNIEVPT). The chain crosses the membrane as a helical span at residues 308–328 (ALFQSVNAIAVMLAGVVLAWL). Over 329–340 (ASPESRGNSTLR) the chain is Cytoplasmic. A helical transmembrane segment spans residues 341-361 (VWLKFAFGLLLMACGFMLLAF). Residues 362–375 (DARHAAADGQASMG) are Periplasmic-facing. Residues 376 to 396 (VMISGLALMGFAELFIDPVAI) form a helical membrane-spanning segment. Residues 397–406 (AQITRLKMSG) lie on the Cytoplasmic side of the membrane. The chain crosses the membrane as a helical span at residues 407–427 (VLTGIYMLATGAVANWLAGVV). Residues 428–446 (AQQTTESQISGMAIAAYQR) lie on the Periplasmic side of the membrane. Residues 447 to 467 (FFSQMGEWTLACVAIIVVLAF) form a helical membrane-spanning segment. Over 468–485 (ATRFLFSTPTNMIQESND) the chain is Cytoplasmic.

It belongs to the major facilitator superfamily. Proton-dependent oligopeptide transporter (POT/PTR) (TC 2.A.17) family. In terms of assembly, monomer.

It localises to the cell inner membrane. Its function is as follows. Proton-dependent permease that transports di- and tripeptides. Shows significantly higher specificity towards dipeptides than tripeptides. Has a preference for dipeptides with a C-terminal Lys residue. Can bind Ala-Lys, Lys-Ala, Ala-Ala. Can also transport alanine and trialanine. The polypeptide is Dipeptide and tripeptide permease C (Escherichia coli (strain K12)).